Here is a 439-residue protein sequence, read N- to C-terminus: tRNA modification GTPase MnmE (439 aa).

The (6S)-5-formyl-5,6,7,8-tetrahydrofolate site is built by Arg20, Glu78, and Lys116. In terms of domain architecture, TrmE-type G spans Gly211 to Glu364. Residues Asn221 to Thr226, Ser240 to Thr246, and Asp265 to Gly268 contribute to the GTP site. Mg(2+) contacts are provided by Ser225 and Thr246. Lys439 is a (6S)-5-formyl-5,6,7,8-tetrahydrofolate binding site.

This sequence belongs to the TRAFAC class TrmE-Era-EngA-EngB-Septin-like GTPase superfamily. TrmE GTPase family. As to quaternary structure, homodimer. Heterotetramer of two MnmE and two MnmG subunits. K(+) serves as cofactor.

Its subcellular location is the cytoplasm. Exhibits a very high intrinsic GTPase hydrolysis rate. Involved in the addition of a carboxymethylaminomethyl (cmnm) group at the wobble position (U34) of certain tRNAs, forming tRNA-cmnm(5)s(2)U34. This is tRNA modification GTPase MnmE from Ehrlichia chaffeensis (strain ATCC CRL-10679 / Arkansas).